The chain runs to 110 residues: Phosphoribosyl-AMP cyclohydrolase (110 aa).

D80 contacts Mg(2+). C81 lines the Zn(2+) pocket. The Mg(2+) site is built by D82 and D84. The Zn(2+) site is built by C97 and C104.

The protein belongs to the PRA-CH family. As to quaternary structure, homodimer. Mg(2+) serves as cofactor. The cofactor is Zn(2+).

It localises to the cytoplasm. The enzyme catalyses 1-(5-phospho-beta-D-ribosyl)-5'-AMP + H2O = 1-(5-phospho-beta-D-ribosyl)-5-[(5-phospho-beta-D-ribosylamino)methylideneamino]imidazole-4-carboxamide. It participates in amino-acid biosynthesis; L-histidine biosynthesis; L-histidine from 5-phospho-alpha-D-ribose 1-diphosphate: step 3/9. Catalyzes the hydrolysis of the adenine ring of phosphoribosyl-AMP. The polypeptide is Phosphoribosyl-AMP cyclohydrolase (Clostridium botulinum (strain Kyoto / Type A2)).